The primary structure comprises 415 residues: Na(+)-translocating NADH-quinone reductase subunit B (415 aa).

4 consecutive transmembrane segments (helical) span residues Trp23–Val40, Ile56–Gly76, Phe129–Met149, and Ile164–Thr184. Position 236 is an FMN phosphoryl threonine (Thr236). A run of 5 helical transmembrane segments spans residues Val275–Trp295, Ile297–Ser317, Met325–Thr345, Trp358–Tyr378, and Gly381–Val401.

It belongs to the NqrB/RnfD family. Composed of six subunits; NqrA, NqrB, NqrC, NqrD, NqrE and NqrF. Riboflavin serves as cofactor. FMN is required as a cofactor.

The protein localises to the cell inner membrane. The enzyme catalyses a ubiquinone + n Na(+)(in) + NADH + H(+) = a ubiquinol + n Na(+)(out) + NAD(+). Its function is as follows. NQR complex catalyzes the reduction of ubiquinone-1 to ubiquinol by two successive reactions, coupled with the transport of Na(+) ions from the cytoplasm to the periplasm. NqrA to NqrE are probably involved in the second step, the conversion of ubisemiquinone to ubiquinol. The polypeptide is Na(+)-translocating NADH-quinone reductase subunit B (Vibrio cholerae serotype O1 (strain ATCC 39541 / Classical Ogawa 395 / O395)).